Reading from the N-terminus, the 775-residue chain is 5-methyltetrahydropteroyltriglutamate--homocysteine methyltransferase (775 aa).

5-methyltetrahydropteroyltri-L-glutamate contacts are provided by residues 16-19 (REMK) and K115. L-homocysteine-binding positions include 435-437 (IGS) and E488. L-methionine contacts are provided by residues 435-437 (IGS) and E488. 5-methyltetrahydropteroyltri-L-glutamate contacts are provided by residues 519 to 520 (RC) and W565. D603 serves as a coordination point for L-homocysteine. L-methionine is bound at residue D603. E609 contributes to the 5-methyltetrahydropteroyltri-L-glutamate binding site. Residues H645, C647, and E669 each contribute to the Zn(2+) site. The Proton donor role is filled by H698. C730 is a Zn(2+) binding site.

This sequence belongs to the vitamin-B12 independent methionine synthase family. The cofactor is Zn(2+).

The catalysed reaction is 5-methyltetrahydropteroyltri-L-glutamate + L-homocysteine = tetrahydropteroyltri-L-glutamate + L-methionine. It participates in amino-acid biosynthesis; L-methionine biosynthesis via de novo pathway; L-methionine from L-homocysteine (MetE route): step 1/1. Its function is as follows. Catalyzes the transfer of a methyl group from 5-methyltetrahydrofolate to homocysteine resulting in methionine formation. The polypeptide is 5-methyltetrahydropteroyltriglutamate--homocysteine methyltransferase (Coxiella burnetii (strain RSA 331 / Henzerling II)).